A 464-amino-acid chain; its full sequence is Probable mannosyltransferase KTR4 (464 aa).

Topologically, residues 1 to 11 (MRFLSKRILKP) are cytoplasmic. The helical; Signal-anchor for type II membrane protein transmembrane segment at 12–32 (VLSVIILISIAVTVVLYFLTA) threads the bilayer. The interval 33 to 130 (NENYLQAVKD…NLVRSGDPLA (98 aa)) is stem region. The Lumenal portion of the chain corresponds to 33-464 (NENYLQAVKD…SMSEEELEMY (432 aa)). Residues 131–464 (GKAKGTILSL…SMSEEELEMY (334 aa)) are catalytic. Glutamate 352 acts as the Nucleophile in catalysis.

It belongs to the glycosyltransferase 15 family.

The protein localises to the membrane. Possible glycosyltransferase that transfers an alpha-D-mannosyl residue from GDP-mannose into lipid-linked oligosaccharide, forming an alpha-(1-&gt;2)-D-mannosyl-D-mannose linkage. The sequence is that of Probable mannosyltransferase KTR4 (KTR4) from Saccharomyces cerevisiae (strain ATCC 204508 / S288c) (Baker's yeast).